We begin with the raw amino-acid sequence, 706 residues long: Protein-glutamine gamma-glutamyltransferase 6 (706 aa).

Ca(2+) contacts are provided by Ala-223, Asn-226, and Asn-228. Cys-274 is a catalytic residue. Ca(2+) is bound by residues Asp-303, Asp-305, Asn-307, Ser-309, and Asp-327. Catalysis depends on residues His-333 and Asp-356. Ca(2+) is bound by residues Asn-396, Thr-417, Glu-445, and Glu-450.

The protein belongs to the transglutaminase superfamily. Transglutaminase family. Requires Ca(2+) as cofactor.

The protein localises to the cytoplasm. The enzyme catalyses L-glutaminyl-[protein] + L-lysyl-[protein] = [protein]-L-lysyl-N(6)-5-L-glutamyl-[protein] + NH4(+). Functionally, catalyzes the cross-linking of proteins and the conjugation of polyamines to proteins. The polypeptide is Protein-glutamine gamma-glutamyltransferase 6 (TGM6) (Homo sapiens (Human)).